Reading from the N-terminus, the 134-residue chain is D-ribose pyranase (134 aa).

Histidine 20 functions as the Proton donor in the catalytic mechanism. Substrate-binding positions include aspartate 28, histidine 99, and 123-125 (FSN).

This sequence belongs to the RbsD / FucU family. RbsD subfamily. As to quaternary structure, homodecamer.

It localises to the cytoplasm. It catalyses the reaction beta-D-ribopyranose = beta-D-ribofuranose. It participates in carbohydrate metabolism; D-ribose degradation; D-ribose 5-phosphate from beta-D-ribopyranose: step 1/2. Its function is as follows. Catalyzes the interconversion of beta-pyran and beta-furan forms of D-ribose. The polypeptide is D-ribose pyranase (Staphylococcus carnosus (strain TM300)).